Consider the following 157-residue polypeptide: Small ribosomal subunit protein uS7 (157 aa).

This sequence belongs to the universal ribosomal protein uS7 family. As to quaternary structure, part of the 30S ribosomal subunit. Contacts proteins S9 and S11.

One of the primary rRNA binding proteins, it binds directly to 16S rRNA where it nucleates assembly of the head domain of the 30S subunit. Is located at the subunit interface close to the decoding center, probably blocks exit of the E-site tRNA. This is Small ribosomal subunit protein uS7 from Herpetosiphon aurantiacus (strain ATCC 23779 / DSM 785 / 114-95).